The chain runs to 201 residues: Small ribosomal subunit protein uS4 (201 aa).

Residues 93–153 enclose the S4 RNA-binding domain; sequence ARLDNVVYRM…EKSKSLEAID (61 aa).

This sequence belongs to the universal ribosomal protein uS4 family. As to quaternary structure, part of the 30S ribosomal subunit. Contacts protein S5. The interaction surface between S4 and S5 is involved in control of translational fidelity.

Functionally, one of the primary rRNA binding proteins, it binds directly to 16S rRNA where it nucleates assembly of the body of the 30S subunit. With S5 and S12 plays an important role in translational accuracy. The polypeptide is Small ribosomal subunit protein uS4 (Flavobacterium psychrophilum (strain ATCC 49511 / DSM 21280 / CIP 103535 / JIP02/86)).